Here is a 499-residue protein sequence, read N- to C-terminus: MISFTVFVFLTLLFTLSLVKQLRKPTAEKRRLLPPGPRKLPFIGNLHQLGTLPHQSLQYLSNKHGPLMFLQLGSIPTLVVSSAEMAREIFKNHDSVFSGRPSLYAANRLGYGSTVSFAPYGEYWREMRKIMILELLSPKRVQSFEAVRFEEVKLLLQTIALSHGPVNLSELTLSLTNNIVCRIALGKRNRSGADDANKVSEMLKETQAMLGGFFPVDFFPRLGWLNKFSGLENRLEKIFREMDNFYDQVIKEHIADNSSERSGAEHEDVVDVLLRVQKDPNQAIAITDDQIKGVLVDIFVAGTDTASATIIWIMSELIRNPKAMKRAQEEVRDLVTGKEMVEEIDLSKLLYIKSVVKEVLRLHPPAPLLVPREITENCTIKGFEIPAKTRVLVNAKSIAMDPCCWENPNEFLPERFLVSPIDFKGQHFEMLPFGVGRRGCPGVNFAMPVVELALANLLFRFDWELPLGLGIQDLDMEEAIGITIHKKAHLWLKATPFCE.

The helical transmembrane segment at 2-22 threads the bilayer; it reads ISFTVFVFLTLLFTLSLVKQL. Heme is bound at residue Cys440.

This sequence belongs to the cytochrome P450 family. It depends on heme as a cofactor.

It localises to the membrane. This chain is Cytochrome P450 71A9 (CYP71A9), found in Glycine max (Soybean).